The following is a 199-amino-acid chain: Chaperone protein TorD (199 aa).

This sequence belongs to the TorD/DmsD family. TorD subfamily.

The protein localises to the cytoplasm. Functionally, involved in the biogenesis of TorA. Acts on TorA before the insertion of the molybdenum cofactor and, as a result, probably favors a conformation of the apoenzyme that is competent for acquiring the cofactor. The polypeptide is Chaperone protein TorD (Shigella boydii serotype 18 (strain CDC 3083-94 / BS512)).